The chain runs to 244 residues: E3 ubiquitin-protein ligase RNF166 (244 aa).

The segment at 10 to 30 is disordered; sequence AQRPQAPGPGPPRPPPPAGPA. The segment covering 15-28 has biased composition (pro residues); the sequence is APGPGPPRPPPPAG. An RING-type zinc finger spans residues 40 to 80; sequence CPICLEVFHRAVGIAGCGHTFCGECLQPCLQVPSPLCPLCR. Cys-105, Cys-108, His-120, and Cys-124 together coordinate Zn(2+). The C2HC RNF-type zinc-finger motif lies at 105 to 124; it reads CRGCSKKVTLAKMRSHVSSC. The 17-residue stretch at 228–244 folds into the UIM domain; it reads DEEAALQAALALSLSEN.

The protein localises to the cytoplasm. It carries out the reaction S-ubiquitinyl-[E2 ubiquitin-conjugating enzyme]-L-cysteine + [acceptor protein]-L-lysine = [E2 ubiquitin-conjugating enzyme]-L-cysteine + N(6)-ubiquitinyl-[acceptor protein]-L-lysine.. Its pathway is protein modification; protein ubiquitination. Functionally, E3 ubiquitin-protein ligase that promotes the ubiquitination of different substrates. In Gallus gallus (Chicken), this protein is E3 ubiquitin-protein ligase RNF166 (RNF166).